The primary structure comprises 219 residues: Dehydration-responsive element-binding protein 1F (219 aa).

The segment at 1 to 45 (MDTEDTSSASSSSVSPPSSPGGGHHHRLPPKRRAGRKKFRETRHP) is disordered. Low complexity predominate over residues 7–16 (SSASSSSVSP). Residues 23–41 (GHHHRLPPKRRAGRKKFRE) show a composition bias toward basic residues. Residues 46–105 (VYRGVRARAGGSRWVCEVREPQAQARIWLGTYPTPEMAARAHDVAAIALRGERGAELNFP) constitute a DNA-binding region (AP2/ERF). Residues 134 to 161 (RRPPPPLALPEDPQEGTSGGGATATSGR) form a disordered region.

Belongs to the AP2/ERF transcription factor family. ERF subfamily. In terms of tissue distribution, mostly expressed in developing seeds and apices.

It localises to the nucleus. Functionally, transcriptional activator that binds specifically to the DNA sequence 5'-[AG]CCGAC-3'. Binding to the C-repeat/DRE element mediates high salinity- and dehydration-inducible transcription. The polypeptide is Dehydration-responsive element-binding protein 1F (DREB1F) (Oryza sativa subsp. indica (Rice)).